A 230-amino-acid polypeptide reads, in one-letter code: Thymine/uracil-DNA glycosylase (230 aa).

[4Fe-4S] cluster is bound by residues cysteine 204, cysteine 211, cysteine 214, and cysteine 221.

The protein belongs to the Nth/MutY family. The cofactor is [4Fe-4S] cluster.

It catalyses the reaction Hydrolyzes mismatched double-stranded DNA and polynucleotides, releasing free thymine.. In terms of biological role, DNA glycosylase that excises thymine from T/G mismatches and uracil from U/G mismatches. Can also process T/GO and U/GO, but not A/G, T/C and U/C. Has weak AP lyase activity. The protein is Thymine/uracil-DNA glycosylase of Pyrobaculum aerophilum (strain ATCC 51768 / DSM 7523 / JCM 9630 / CIP 104966 / NBRC 100827 / IM2).